The primary structure comprises 341 residues: Small ribosomal subunit protein uS3 (341 aa).

A KH type-2 domain is found at 38 to 106 (IRRMMTRGME…QVQLNILEVK (69 aa)). Disordered stretches follow at residues 224-246 (RAVRGRSARREQPAAESPALETA) and 274-341 (PAGQ…TKEG). Low complexity-rich tracts occupy residues 285–303 (AEQPVVTAEPAAAAAVTGE) and 311–333 (AAPAEPTTSAAAEEAPGGADAPS).

This sequence belongs to the universal ribosomal protein uS3 family. Part of the 30S ribosomal subunit. Forms a tight complex with proteins S10 and S14.

Binds the lower part of the 30S subunit head. Binds mRNA in the 70S ribosome, positioning it for translation. The protein is Small ribosomal subunit protein uS3 of Acidothermus cellulolyticus (strain ATCC 43068 / DSM 8971 / 11B).